The sequence spans 862 residues: DNA topoisomerase 3-beta-1 (862 aa).

Residues 3–153 (TVLMVAEKPS…EKTVFRARFS (151 aa)) form the Toprim domain. One can recognise a Topo IA-type catalytic domain in the interval 171 to 593 (DHNEALSVDA…HTLDVFKRKF (423 aa)). The active-site O-(5'-phospho-DNA)-tyrosine intermediate is Y336. Positions 821 to 851 (PMHRGGPGRRQGRGRGRARRPPGKPNPRRPK) are enriched in basic residues. Positions 821-854 (PMHRGGPGRRQGRGRGRARRPPGKPNPRRPKDKM) are disordered.

Belongs to the type IA topoisomerase family. In terms of tissue distribution, isoform 1 is found in testis, heart and skeletal muscle. A 4 kb transcript which probably represents isoform 2 is found in thymus, kidney and pancreas.

The enzyme catalyses ATP-independent breakage of single-stranded DNA, followed by passage and rejoining.. Functionally, releases the supercoiling and torsional tension of DNA introduced during the DNA replication and transcription by transiently cleaving and rejoining one strand of the DNA duplex. Introduces a single-strand break via transesterification at a target site in duplex DNA. The scissile phosphodiester is attacked by the catalytic tyrosine of the enzyme, resulting in the formation of a DNA-(5'-phosphotyrosyl)-enzyme intermediate and the expulsion of a 3'-OH DNA strand. The free DNA strand than undergoes passage around the unbroken strand thus removing DNA supercoils. Finally, in the religation step, the DNA 3'-OH attacks the covalent intermediate to expel the active-site tyrosine and restore the DNA phosphodiester backbone. Possesses negatively supercoiled DNA relaxing activity. The chain is DNA topoisomerase 3-beta-1 (TOP3B) from Homo sapiens (Human).